The primary structure comprises 429 residues: Adenylosuccinate synthetase (429 aa).

Residues 12–18 (GDEGKGK) and 40–42 (GHT) contribute to the GTP site. The active-site Proton acceptor is the D13. D13 and G40 together coordinate Mg(2+). IMP contacts are provided by residues 13–16 (DEGK), 38–41 (NAGH), T129, R143, Q224, T239, and R303. The active-site Proton donor is the H41. 299-305 (ATTGRRR) provides a ligand contact to substrate. GTP is bound by residues R305, 331–333 (KLD), and 413–415 (SVG).

It belongs to the adenylosuccinate synthetase family. As to quaternary structure, homodimer. It depends on Mg(2+) as a cofactor.

The protein localises to the cytoplasm. The catalysed reaction is IMP + L-aspartate + GTP = N(6)-(1,2-dicarboxyethyl)-AMP + GDP + phosphate + 2 H(+). Its pathway is purine metabolism; AMP biosynthesis via de novo pathway; AMP from IMP: step 1/2. Functionally, plays an important role in the de novo pathway of purine nucleotide biosynthesis. Catalyzes the first committed step in the biosynthesis of AMP from IMP. The polypeptide is Adenylosuccinate synthetase (Desulforapulum autotrophicum (strain ATCC 43914 / DSM 3382 / VKM B-1955 / HRM2) (Desulfobacterium autotrophicum)).